Here is a 24-residue protein sequence, read N- to C-terminus: Unknown protein 3 (24 aa).

The chain is Unknown protein 3 from Pseudotsuga menziesii (Douglas-fir).